Reading from the N-terminus, the 972-residue chain is Nuclear factor NF-kappa-B p105 subunit (972 aa).

Residues 39–246 (ADGPYLQILE…DAIYDSKAPN (208 aa)) form the RHD domain. Cys61 bears the S-nitrosocysteine; alternate mark. Residue Cys61 is the site of S-(15-deoxy-Delta12,14-prostaglandin J2-9-yl)cysteine; alternate attachment. Lys325 is covalently cross-linked (Glycyl lysine isopeptide (Lys-Gly) (interchain with G-Cter in SUMO2)). Phosphoserine; by PKA is present on Ser337. The Nuclear localization signal signature appears at 360–365 (QRKRQK). Residues 372–394 (DSFGGGSGAGAGGGGMFGSGGGG) form a GRR region. The segment at 425-473 (KSNAGMKHGTIDTPSKNDSEGCGKNVDREAVNLSGKVTEPTEQDKESSM) is disordered. Lys431 and Lys440 each carry N6-acetyllysine; by EP300. Residues 435 to 972 (IDTPSKNDSE…GQEGPIEGKI (538 aa)) are interaction with CFLAR. Residues 439–454 (SKNDSEGCGKNVDREA) are compositionally biased toward basic and acidic residues. ANK repeat units follow at residues 539–568 (NGDS…GLIS), 578–607 (LYQT…DLSL), 611–640 (LGNS…AALL), 647–676 (EGLN…DVNA), 681–711 (SGRT…HVDS), and 715–744 (DGTT…DPLV). The interval 647–681 (EGLNAIHIAVMSNSMPCLLLLVAAGADVNAQERKS) is essential for interaction with HIF1AN. (3S)-3-hydroxyasparagine; by HIF1AN is present on Asn675. Ser756 carries the phosphoserine modification. An ANK 7 repeat occupies 768–798 (PGTTPLDMATNWQVFDILNGKPYEPEFTSDD). A Death domain is found at 814–889 (LQLYKLLEIP…EAIEVIQAAF (76 aa)). Residues 894-926 (TAAPSPGKGAPQTLSLPLSSASTRSPVDEVRDD) are disordered. Polar residues predominate over residues 905-918 (QTLSLPLSSASTRS). Residues Ser908 and Ser912 each carry the phosphoserine; by GSK3-beta; in vitro modification. Ser927 carries the phosphoserine modification. A phosphoserine; by IKKB mark is found at Ser931 and Ser936. Ser941 carries the phosphoserine modification. Thr947 is subject to Phosphothreonine.

In terms of assembly, component of the NF-kappa-B p65-p50 complex. Homodimer; component of the NF-kappa-B p50-p50 complex. Component of the NF-kappa-B p105-p50 complex. Component of the NF-kappa-B p50-c-Rel complex. Component of a complex consisting of the NF-kappa-B p50-p50 homodimer and BCL3. Also interacts with MAP3K8. NF-kappa-B p50 subunit interacts with NCOA3 coactivator, which may coactivate NF-kappa-B dependent expression via its histone acetyltransferase activity. Interacts with TSC22D3; this interaction prevents nuclear translocation and DNA-binding. Interacts with SPAG9 and UNC5CL. NFKB1/p105 interacts with CFLAR; the interaction inhibits p105 processing into p50. NFKB1/p105 forms a ternary complex with MAP3K8 and TNIP2. Interacts with GSK3B; the interaction prevents processing of p105 to p50. NFKB1/p50 interacts with NFKBIE. NFKB1/p50 interacts with NFKBIZ. Nuclear factor NF-kappa-B p50 subunit interacts with NFKBID. Directly interacts with MEN1. Interacts with HIF1AN. Interacts with FEM1A; interaction is direct. Post-translationally, generation of the NF-kappa-B p50 (Nuclear factor NF-kappa-B p50 subunit) transcription factor takes place both cotranslationally and post-translationally via non-mutually exclusive mechanisms. A cotranslational processing allows the production of both p50 and p105 (Nuclear factor NF-kappa-B p105 subunit) from a single NFKB1 mRNA. While translation occurs, the particular unfolded structure after the GRR repeat region acts as a substrate for the proteasome, promoting degradation of the C-terminus. The GRR acts as a proteasomal 'stop signal', protecting the region upstream of the GRR from degradation and promoting generation of p50. It is unclear if limited proteasome degradation during cotranslational processing depends on ubiquitination. NF-kappa-B p50 is also generated post-translationally following ubiquitination by the KPC complex, leading to limited processing by the proteasome downstream of the GRR region, thereby generating p50. In terms of processing, phosphorylation at the C-terminus by IKBKB/IKKB acts as a signal for ubiquitination and promotes either complete degradation or processing to generate the NF-kappa-B p50 (Nuclear factor NF-kappa-B p50 subunit). Phosphorylation at Ser-908 and Ser-912 primes p105 for proteolytic processing in response to TNF-alpha stimulation. Phosphorylation at Ser-927, Ser-931 and Ser-936 are required for BTRC/BTRCP-mediated ubiquitination and proteolysis. Phosphorylation at Ser-931 is also required for ubiquitination by the KPC complex and limited processing to generate NF-kappa-B p50 (Nuclear factor NF-kappa-B p50 subunit). Polyubiquitinated at multiple Lys residues in the C-terminus. Polyubiquitinated by the SCF(FBXW11) and SCF(BTRC) complexes following phosphorylation at Ser-923, Ser-927, Ser-931 and Ser-936, leading to its complete degradation. In contrast, polyubiquitination by the KPC complex following phosphorylation at Ser-931 leads to limited proteosomal processing and generation of the active NF-kappa-B p50 (Nuclear factor NF-kappa-B p50 subunit). Post-translationally, S-nitrosylation of Cys-61 affects DNA binding. In terms of processing, the covalent modification of cysteine by 15-deoxy-Delta12,14-prostaglandin-J2 is autocatalytic and reversible. It may occur as an alternative to other cysteine modifications, such as S-nitrosylation and S-palmitoylation.

It is found in the cytoplasm. The protein resides in the nucleus. In terms of biological role, NF-kappa-B is a pleiotropic transcription factor present in almost all cell types and is the endpoint of a series of signal transduction events that are initiated by a vast array of stimuli related to many biological processes such as inflammation, immunity, differentiation, cell growth, tumorigenesis and apoptosis. NF-kappa-B is a homo- or heterodimeric complex formed by the Rel-like domain-containing proteins RELA/p65, RELB, NFKB1/p105, NFKB1/p50, REL and NFKB2/p52 and the heterodimeric p65-p50 complex appears to be most abundant one. The dimers bind at kappa-B sites in the DNA of their target genes and the individual dimers have distinct preferences for different kappa-B sites that they can bind with distinguishable affinity and specificity. Different dimer combinations act as transcriptional activators or repressors, respectively. NF-kappa-B is controlled by various mechanisms of post-translational modification and subcellular compartmentalization as well as by interactions with other cofactors or corepressors. NF-kappa-B complexes are held in the cytoplasm in an inactive state complexed with members of the NF-kappa-B inhibitor (I-kappa-B) family. In a conventional activation pathway, I-kappa-B is phosphorylated by I-kappa-B kinases (IKKs) in response to different activators, subsequently degraded thus liberating the active NF-kappa-B complex which translocates to the nucleus. NF-kappa-B heterodimeric p65-p50 and RelB-p50 complexes are transcriptional activators. The NF-kappa-B p50-p50 homodimer is a transcriptional repressor, but can act as a transcriptional activator when associated with BCL3. NFKB1 appears to have dual functions such as cytoplasmic retention of attached NF-kappa-B proteins by p105 and generation of p50 by a cotranslational processing. The proteasome-mediated process ensures the production of both p50 and p105 and preserves their independent function, although processing of NFKB1/p105 also appears to occur post-translationally. p50 binds to the kappa-B consensus sequence 5'-GGRNNYYCC-3', located in the enhancer region of genes involved in immune response and acute phase reactions. In a complex with MAP3K8, NFKB1/p105 represses MAP3K8-induced MAPK signaling; active MAP3K8 is released by proteasome-dependent degradation of NFKB1/p105. Its function is as follows. P105 is the precursor of the active p50 subunit (Nuclear factor NF-kappa-B p50 subunit) of the nuclear factor NF-kappa-B. Acts as a cytoplasmic retention of attached NF-kappa-B proteins by p105. Constitutes the active form, which associates with RELA/p65 to form the NF-kappa-B p65-p50 complex to form a transcription factor. Together with RELA/p65, binds to the kappa-B consensus sequence 5'-GGRNNYYCC-3', located in the enhancer region of genes involved in immune response and acute phase reactions. In Canis lupus familiaris (Dog), this protein is Nuclear factor NF-kappa-B p105 subunit (NFKB1).